We begin with the raw amino-acid sequence, 635 residues long: Threonine--tRNA ligase (635 aa).

The region spanning 1 to 61 (MIKITLKDGK…HKDSSLEILT (61 aa)) is the TGS domain. A catalytic region spans residues 242-532 (DHRKLGKELD…LIEQYAGAFP (291 aa)). Cysteine 333, histidine 384, and histidine 509 together coordinate Zn(2+).

Belongs to the class-II aminoacyl-tRNA synthetase family. In terms of assembly, homodimer. Zn(2+) serves as cofactor.

It is found in the cytoplasm. The catalysed reaction is tRNA(Thr) + L-threonine + ATP = L-threonyl-tRNA(Thr) + AMP + diphosphate + H(+). Its function is as follows. Catalyzes the attachment of threonine to tRNA(Thr) in a two-step reaction: L-threonine is first activated by ATP to form Thr-AMP and then transferred to the acceptor end of tRNA(Thr). Also edits incorrectly charged L-seryl-tRNA(Thr). This is Threonine--tRNA ligase from Clostridium botulinum (strain Langeland / NCTC 10281 / Type F).